The chain runs to 92 residues: UPF0223 protein SPy_1248/M5005_Spy0958 (92 aa).

It belongs to the UPF0223 family.

This chain is UPF0223 protein SPy_1248/M5005_Spy0958, found in Streptococcus pyogenes serotype M1.